Consider the following 1121-residue polypeptide: RecBCD enzyme subunit RecC (1121 aa).

This sequence belongs to the RecC family. As to quaternary structure, heterotrimer of RecB, RecC and RecD. All subunits contribute to DNA-binding.

Its function is as follows. A helicase/nuclease that prepares dsDNA breaks (DSB) for recombinational DNA repair. Binds to DSBs and unwinds DNA via a highly rapid and processive ATP-dependent bidirectional helicase activity. Unwinds dsDNA until it encounters a Chi (crossover hotspot instigator) sequence from the 3' direction. Cuts ssDNA a few nucleotides 3' to the Chi site. The properties and activities of the enzyme are changed at Chi. The Chi-altered holoenzyme produces a long 3'-ssDNA overhang and facilitates RecA-binding to the ssDNA for homologous DNA recombination and repair. Holoenzyme degrades any linearized DNA that is unable to undergo homologous recombination. In the holoenzyme this subunit recognizes the wild-type Chi sequence, and when added to isolated RecB increases its ATP-dependent helicase processivity. The protein is RecBCD enzyme subunit RecC of Haemophilus influenzae (strain ATCC 51907 / DSM 11121 / KW20 / Rd).